The following is a 116-amino-acid chain: Large ribosomal subunit protein bL19 (116 aa).

The protein belongs to the bacterial ribosomal protein bL19 family.

In terms of biological role, this protein is located at the 30S-50S ribosomal subunit interface and may play a role in the structure and function of the aminoacyl-tRNA binding site. The sequence is that of Large ribosomal subunit protein bL19 from Staphylococcus saprophyticus subsp. saprophyticus (strain ATCC 15305 / DSM 20229 / NCIMB 8711 / NCTC 7292 / S-41).